The sequence spans 90 residues: Translation initiation factor IF-1 (90 aa).

Residues 15–90 (KKQKRKKEEV…TLGRIVFRHK (76 aa)) enclose the S1-like domain.

This sequence belongs to the IF-1 family. Component of the 30S ribosomal translation pre-initiation complex which assembles on the 30S ribosome in the order IF-2 and IF-3, IF-1 and N-formylmethionyl-tRNA(fMet); mRNA recruitment can occur at any time during PIC assembly.

Its subcellular location is the cytoplasm. In terms of biological role, one of the essential components for the initiation of protein synthesis. Stabilizes the binding of IF-2 and IF-3 on the 30S subunit to which N-formylmethionyl-tRNA(fMet) subsequently binds. Helps modulate mRNA selection, yielding the 30S pre-initiation complex (PIC). Upon addition of the 50S ribosomal subunit IF-1, IF-2 and IF-3 are released leaving the mature 70S translation initiation complex. This chain is Translation initiation factor IF-1, found in Mycoplasma sp.